Here is a 541-residue protein sequence, read N- to C-terminus: MAKTIAYDEEARRGLERGLNALADAVKVTLGPKGRNVVLEKKWGAPTITNDGVSIAKEIELEDPYEKIGAELVKEVAKKTDDVAGDGTTTATVLAQALVREGLRNVAAGANPLGLKRGIEKAVEKVTETLLKSAKEVETKDQIAATAAISAGDQSIGDLIAEAMDKVGNEGVITVEESNTFGLQLELTEGMRFDKGYISGYFVTDAERQEAVLEDPFILLVSSKVSTVKDLLPLLEKVIQAGKPLLIIAEDVEGEALSTLVVNKIRGTFKSVAVKAPGFGDRRKAMLQDMAILTGGQVISEEVGLSLESADISLLGKARKVVVTKDETTIVEGAGDSDAIAGRVAQIRTEIENSDSDYDREKLQERLAKLAGGVAVIKAGAATEVELKERKHRIEDAVRNAKAAVEEGIVAGGGVALLHAIPALDELKLEGDEATGANIVRVALEAPLKQIAFNGGLEPGVVAEKVRNSPAGTGLNAATGEYEDLLKAGVADPVKVTRSALQNAASIAGLFLTTEAVVADKPEKAAAPAGDPTGGMGGMDF.

ATP contacts are provided by residues 29–32, 86–90, Gly413, 476–478, and Asp492; these read TLGP, DGTTT, and NAA.

The protein belongs to the chaperonin (HSP60) family. In terms of assembly, forms a cylinder of 14 subunits composed of two heptameric rings stacked back-to-back. Interacts with the co-chaperonin GroES.

The protein resides in the secreted. Its subcellular location is the capsule. It is found in the cell surface. The protein localises to the cell wall. The enzyme catalyses ATP + H2O + a folded polypeptide = ADP + phosphate + an unfolded polypeptide.. Its function is as follows. Together with its co-chaperonin GroES, plays an essential role in assisting protein folding. The GroEL-GroES system forms a nano-cage that allows encapsulation of the non-native substrate proteins and provides a physical environment optimized to promote and accelerate protein folding. In Mycobacterium avium (strain 104), this protein is Chaperonin GroEL 2.